Consider the following 642-residue polypeptide: Threonine--tRNA ligase (642 aa).

Positions 1–61 (MPVITLPDGS…ENDATLSIIT (61 aa)) constitute a TGS domain. Residues 243–534 (DHRKIGKQLD…LTEEFAGFFP (292 aa)) are catalytic. C334, H385, and H511 together coordinate Zn(2+).

The protein belongs to the class-II aminoacyl-tRNA synthetase family. In terms of assembly, homodimer. Zn(2+) is required as a cofactor.

It localises to the cytoplasm. It catalyses the reaction tRNA(Thr) + L-threonine + ATP = L-threonyl-tRNA(Thr) + AMP + diphosphate + H(+). Catalyzes the attachment of threonine to tRNA(Thr) in a two-step reaction: L-threonine is first activated by ATP to form Thr-AMP and then transferred to the acceptor end of tRNA(Thr). Also edits incorrectly charged L-seryl-tRNA(Thr). This chain is Threonine--tRNA ligase, found in Salmonella agona (strain SL483).